We begin with the raw amino-acid sequence, 194 residues long: RNA polymerase II subunit A C-terminal domain phosphatase SSU72 like protein 3 (194 aa).

Belongs to the SSU72 phosphatase family.

It is found in the nucleus. It catalyses the reaction O-phospho-L-seryl-[protein] + H2O = L-seryl-[protein] + phosphate. The enzyme catalyses O-phospho-L-threonyl-[protein] + H2O = L-threonyl-[protein] + phosphate. In terms of biological role, protein phosphatase that catalyzes the dephosphorylation of the C-terminal domain of RNA polymerase II. Plays a role in RNA processing and termination. The sequence is that of RNA polymerase II subunit A C-terminal domain phosphatase SSU72 like protein 3 from Homo sapiens (Human).